We begin with the raw amino-acid sequence, 681 residues long: Envelope glycoprotein (681 aa).

Positions 1–18 are cleaved as a signal peptide; that stretch reads MKTTCLFISLILIQGIKT. The Extracellular segment spans residues 19-648; that stretch reads LPILEIASNN…GLGGKWWTSD (630 aa). A receptor-binding region spans residues 38 to 188; it reads SGTLQKTEDV…FSRQGQGYRH (151 aa). N-linked (GlcNAc...) asparagine; by host glycosylation is found at Asn-94, Asn-171, Asn-190, Asn-202, Asn-207, Asn-219, Asn-223, and Asn-255. The segment at 223-351 is disordered; it reads NQTCAPSKIP…STNNTSKNNF (129 aa). The segment covering 244-259 has biased composition (low complexity); sequence PTSTPTDATTLNTTDP. The interval 277–455 is mucin-like region; that stretch reads EPYTTSDAVT…PFLDGLINAP (179 aa). 2 stretches are compositionally biased toward polar residues: residues 278 to 290 and 308 to 341; these read PYTT…KQGL and EGNN…TTAI. Residues Asn-310, Asn-323, Asn-326, Asn-337, Asn-344, Asn-345, Asn-350, Asn-360, Asn-389, Asn-397, Asn-408, and Asn-487 are each glycosylated (N-linked (GlcNAc...) asparagine; by host). The span at 342-351 shows a compositional bias: low complexity; it reads STNNTSKNNF. Residues 366–414 are compositionally biased toward polar residues; that stretch reads TQSTATENEQTSAPSKTTLPPTGNLTTAKSTNNTKGPTTTAPNMTNGHL. The interval 366–425 is disordered; it reads TQSTATENEQTSAPSKTTLPPTGNLTTAKSTNNTKGPTTTAPNMTNGHLTSPSPTPNPTT. The fusion peptide stretch occupies residues 529 to 549; that stretch reads GLSWIPFFGPGIEGLYTAGLI. Asn-564 and Asn-619 each carry an N-linked (GlcNAc...) asparagine; by host glycan. Residues 649 to 669 form a helical membrane-spanning segment; it reads WGVLTNLGILLLLSIAVLIAL. Residues 670 to 681 are Cytoplasmic-facing; it reads SCICRIFTKYIG. S-palmitoyl cysteine; by host attachment occurs at residues Cys-671 and Cys-673.

It belongs to the filoviruses glycoprotein family. As to quaternary structure, homotrimer; each monomer consists of a GP1 and a GP2 subunit linked by disulfide bonds. The resulting peplomers (GP1,2) protrude from the virus surface as spikes. GP1,2 interacts with human CD209 and CLEC4M (collectively referred to as DC-SIGN(R)). Asialoglycoprotein receptor (ASGP-R) may be a liver-specific receptor for GP1,2. Members of the Tyro3 receptor tyrosine kinase family may be cell entry factors interacting with GP1,2. N-glycosylated. Post-translationally, O-glycosylated in the mucin-like region. In terms of processing, specific enzymatic cleavages in vivo yield mature proteins. The precursor is processed into GP1 and GP2 by host cell furin in the trans Golgi, and maybe by other host proteases, to yield the mature GP1 and GP2 proteins. The cleavage site corresponds to the furin optimal cleavage sequence [KR]-X-[KR]-R. GP1 is phosphorylated on serine residues between residues 260 and 273.

The protein resides in the virion membrane. Its subcellular location is the host cell membrane. In terms of biological role, GP1 is responsible for binding to the receptor(s) on target cells. Interacts with CD209/DC-SIGN and CLEC4M/DC-SIGNR which act as cofactors for virus entry into the host cell. Binding to CD209 and CLEC4M, which are respectively found on dendritic cells (DCs), and on endothelial cells of liver sinusoids and lymph node sinuses, facilitate infection of macrophages and endothelial cells. These interactions not only facilitate virus cell entry, but also allow capture of viral particles by DCs and subsequent transmission to susceptible cells without DCs infection (trans infection). Its function is as follows. GP2 acts as a class I viral fusion protein. Under the current model, the protein has at least 3 conformational states: pre-fusion native state, pre-hairpin intermediate state, and post-fusion hairpin state. During viral and target cell membrane fusion, the coiled coil regions (heptad repeats) assume a trimer-of-hairpins structure, positioning the fusion peptide in close proximity to the C-terminal region of the ectodomain. The formation of this structure appears to drive apposition and subsequent fusion of viral and target cell membranes. Responsible for penetration of the virus into the cell cytoplasm by mediating the fusion of the membrane of the endocytosed virus particle with the endosomal membrane. Low pH in endosomes induces an irreversible conformational change in GP2, releasing the fusion hydrophobic peptide. The protein is Envelope glycoprotein (GP) of Lake Victoria marburgvirus (strain Popp-67) (MARV).